Consider the following 124-residue polypeptide: Conotoxin Cl14.12 (124 aa).

A signal peptide spans 1 to 17; it reads MKVAVVLLVSLLAVTYA. A propeptide spanning residues 18-74 is cleaved from the precursor; sequence LPEKRIFFGGIVDKVKDTFTKIFNKAKETFDKITDGFDVDFDEVVDKLIAQIHSTPT.

Contains 2 disulfide bond. In terms of tissue distribution, expressed by the venom duct.

It is found in the secreted. The sequence is that of Conotoxin Cl14.12 from Californiconus californicus (California cone).